The primary structure comprises 943 residues: Receptor-like protein 35 (943 aa).

Positions 1 to 31 are cleaved as a signal peptide; it reads MTGSWNPTSIIIPVTLSFLLSFIHNFADVVA. Topologically, residues 32-897 are extracellular; the sequence is APTRHLCLPE…EEEDEEEISW (866 aa). N-linked (GlcNAc...) asparagine glycans are attached at residues Asn-67, Asn-82, Asn-118, Asn-147, Asn-171, Asn-195, Asn-219, and Asn-222. 11 LRR repeats span residues 124 to 148, 150 to 171, 172 to 196, 198 to 220, 222 to 244, 245 to 267, 268 to 292, 293 to 317, 319 to 340, 341 to 364, and 366 to 389; these read LQNLRVLDLTQNDLDGEIPSSIGNL, HLTSLHLSYNQFLGLIPSSIEN, LSRLTSLHLSSNQFSGQIPSSIGNL, HLTSLELSSNQFSGQIPSSIGNL, NLTFLSLPSNDFFGQIPSSIGNL, ARLTYLYLSYNNFVGEIPSSFGN, LNQLIVLQVDSNKLSGNVPISLLNL, TRLSALLLSHNQFTGTIPNNISLLS, LMDFEASNNAFTGTLPSSLFNI, PPLIRLDLSDNQLNGTLHFGNISS, and SNLQYLIIGSNNFIGTIPRSLSRF. Asn-291 and Asn-312 each carry an N-linked (GlcNAc...) asparagine glycan. Residues Asn-354 and Asn-361 are each glycosylated (N-linked (GlcNAc...) asparagine). An LRR 12; degenerate repeat occupies 390 to 414; it reads VNLTLFDLSHLNTQCRPVDFSIFSH. N-linked (GlcNAc...) asparagine glycosylation occurs at Asn-391. LRR repeat units lie at residues 415-439, 440-463, 467-490, 491-514, 515-537, 544-568, 569-592, 593-617, 619-639, 640-665, 667-685, 686-709, 753-777, 778-801, 802-825, and 827-850; these read LKSLDDLRLSYLTTTTIDLNDILPY, FKTLRSLDISGNLVSATNKSSVSS, SQSIQSLYLSGCGITDFPEILRTQ, HELGFLDVSNNKIKGQVPGWLWTL, PNLFYLNLSNNTFISFESSSKKH, KPSMIHLFASNNNFTGKIPSFICGL, RSLNTLDLSENNYNGSIPRCMEKL, KSTLFVLNLRQNNLSGGLPKHIFES, RSLDVGHNLLVGKLPRSLIRF, SNLEVLNVESNRINDTFPFWLSSLSK, QVLVLRSNAFHGPIHEATF, PELRIIDISHNHFNGTLPTEYFVK, LTIYTALDFSGNKFEGEIPKSIGLL, KELLVLNLSNNAFGGHIPSSMGNL, TALESLDVSQNKLTGEIPQELGDL, and FLAYMNFSHNQLAGLVPGGTQFRR. N-linked (GlcNAc...) asparagine glycosylation is present at Asn-457. Asn-521, Asn-524, Asn-556, Asn-582, and Asn-605 each carry an N-linked (GlcNAc...) asparagine glycan. The N-linked (GlcNAc...) asparagine glycan is linked to Asn-653. Asn-699 carries N-linked (GlcNAc...) asparagine glycosylation. N-linked (GlcNAc...) asparagine glycosylation is found at Asn-784 and Asn-800. 3 N-linked (GlcNAc...) asparagine glycosylation sites follow: Asn-832, Asn-852, and Asn-882. The chain crosses the membrane as a helical span at residues 898 to 918; that stretch reads IAAAIGFIPGIVFGLTIGYIL. Residues 919 to 943 lie on the Cytoplasmic side of the membrane; sequence VSYKPEWFMNPFGRNNRRRRNTTTH.

Belongs to the RLP family.

It localises to the cell membrane. This Arabidopsis thaliana (Mouse-ear cress) protein is Receptor-like protein 35.